The primary structure comprises 333 residues: Ornithine carbamoyltransferase (333 aa).

Carbamoyl phosphate-binding positions include 56–59, Q83, R107, and 134–137; these read STRT and HPTQ. Residues N167, D231, and 235-236 contribute to the L-ornithine site; that span reads SM. Residues 273–274 and R318 contribute to the carbamoyl phosphate site; that span reads CL.

It belongs to the aspartate/ornithine carbamoyltransferase superfamily. OTCase family.

The protein localises to the cytoplasm. It catalyses the reaction carbamoyl phosphate + L-ornithine = L-citrulline + phosphate + H(+). It functions in the pathway amino-acid biosynthesis; L-arginine biosynthesis; L-arginine from L-ornithine and carbamoyl phosphate: step 1/3. Functionally, reversibly catalyzes the transfer of the carbamoyl group from carbamoyl phosphate (CP) to the N(epsilon) atom of ornithine (ORN) to produce L-citrulline. The chain is Ornithine carbamoyltransferase (argF) from Staphylococcus aureus (strain Mu50 / ATCC 700699).